Reading from the N-terminus, the 357-residue chain is Sorbitol dehydrogenase (357 aa).

The residue at position 2 (Ala2) is an N-acetylalanine. Cys45 lines the Zn(2+) pocket. Residue Tyr51 participates in substrate binding. Residues His70 and Glu71 each contribute to the Zn(2+) site. A substrate-binding site is contributed by Glu156. Ile184, Asp204, and Arg209 together coordinate NAD(+). Phosphoserine occurs at positions 211 and 225. NAD(+)-binding positions include 273–275 and 297–299; these read VGL and VFR. Substrate contacts are provided by Arg299 and Tyr300.

This sequence belongs to the zinc-containing alcohol dehydrogenase family. As to quaternary structure, homotetramer. Requires Zn(2+) as cofactor.

It localises to the mitochondrion membrane. The protein localises to the cell projection. The protein resides in the cilium. It is found in the flagellum. The catalysed reaction is xylitol + NAD(+) = D-xylulose + NADH + H(+). It catalyses the reaction L-iditol + NAD(+) = keto-L-sorbose + NADH + H(+). The enzyme catalyses keto-D-fructose + NADH + H(+) = D-sorbitol + NAD(+). Polyol dehydrogenase that catalyzes the reversible NAD(+)-dependent oxidation of various sugar alcohols. Is active with xylitol, L-iditol and D-sorbitol (D-glucitol) as substrates, leading to the C2-oxidized products D-xylulose, L-sorbose and D-fructose, respectively. Is a key enzyme in the polyol pathway that interconverts glucose and fructose via sorbitol, which constitutes an important alternate route for glucose metabolism. May play a role in sperm motility by using sorbitol as an alternative energy source for sperm motility. The sequence is that of Sorbitol dehydrogenase (SORD) from Macaca fascicularis (Crab-eating macaque).